The primary structure comprises 134 residues: Small ribosomal subunit protein uS9 (134 aa).

A disordered region spans residues 114-134; that stretch reads EVERKKYGLKKARRAPQFSKR. The span at 120–134 shows a compositional bias: basic residues; that stretch reads YGLKKARRAPQFSKR.

The protein belongs to the universal ribosomal protein uS9 family.

In Thermotoga neapolitana (strain ATCC 49049 / DSM 4359 / NBRC 107923 / NS-E), this protein is Small ribosomal subunit protein uS9.